The primary structure comprises 840 residues: Serotype-specific mannosyltransferase WbdA (840 aa).

The alpha-(1-&gt;2)-mannosyltransferase stretch occupies residues 2 to 399; it reads HILIDVQGYQ…WANTAHLAIE (398 aa). Positions 456-829 are alpha-(1-&gt;3)-mannosyltransferase; sequence KLLVDISVLA…WKQSAEFLLK (374 aa).

This sequence belongs to the glycosyltransferase group 1 family. Glycosyltransferase 4 subfamily. Monomer. Interacts with the C-terminal region of WbdD. Interacts with WbdD via a surface-exposed alpha-helix in the C-terminal mannosyltransferase domain. However, the C-terminal domain is unable to interact with WbdD in the absence of its N-terminal partner.

It is found in the cell inner membrane. It catalyses the reaction [alpha-D-Man-(1-&gt;3)-alpha-D-Man-(1-&gt;3)-alpha-D-Man-(1-&gt;2)-alpha-D-Man-(1-&gt;2)](n)-alpha-D-Man-(1-&gt;3)-alpha-D-Man-(1-&gt;3)-alpha-D-Man-(1-&gt;3)-alpha-D-GlcNAc-di-trans,octa-cis-undecaprenyl diphosphate + 2 GDP-alpha-D-mannose = alpha-D-Man-(1-&gt;2)-alpha-D-Man-(1-&gt;2)-[alpha-D-Man-(1-&gt;3)-alpha-D-Man-(1-&gt;3)-alpha-D-Man-(1-&gt;2)-alpha-D-Man-(1-&gt;2)](n)-alpha-D-Man-(1-&gt;3)-alpha-D-Man-(1-&gt;3)-alpha-D-Man-(1-&gt;3)-alpha-D-GlcNAc-di-trans,octa-cis-undecaprenyl diphosphate + 2 GDP + 2 H(+). The enzyme catalyses alpha-D-Man-(1-&gt;2)-alpha-D-Man-(1-&gt;2)-[alpha-D-Man-(1-&gt;3)-alpha-D-Man-(1-&gt;3)-alpha-D-Man-(1-&gt;2)-alpha-D-Man-(1-&gt;2)](n)-alpha-D-Man-(1-&gt;3)-alpha-D-Man-(1-&gt;3)-alpha-D-Man-(1-&gt;3)-alpha-D-GlcNAc-di-trans,octa-cis-undecaprenyl diphosphate + 2 GDP-alpha-D-mannose = [alpha-D-Man-(1-&gt;3)-alpha-D-Man-(1-&gt;3)-alpha-D-Man-(1-&gt;2)-alpha-D-Man-(1-&gt;2)](n+1)-alpha-D-Man-(1-&gt;3)-alpha-D-Man-(1-&gt;3)-alpha-D-Man-(1-&gt;3)-alpha-D-GlcNAc-di-trans,octa-cis-undecaprenyl diphosphate + 2 GDP + 2 H(+). It participates in bacterial outer membrane biogenesis; LPS O-antigen biosynthesis. Its activity is regulated as follows. The alpha-(1-&gt;2)-mannosyltransferase activity of the N-terminal domain is regulated by the activity of the C-terminal alpha-(1-&gt;3)-mannosyltransferase. The relative concentration of WbdA and WbdD is critical in determining the O polysaccharide (OPS) modal chain length. OPS chain length increases with increasing concentration of WbdA, but the maximum length does not increase beyond the wild-type modal length, despite substantial increases in WbdA concentration. In terms of biological role, mannosyltransferase involved in the biosynthesis of the repeat unit of the lipopolysaccharide (LPS) O-antigen region. Catalyzes the polymerization of a tetrasaccharide repeat unit containing two alpha-(1-&gt;3)- and two alpha-(1-&gt;2)-linked mannopyranose residues. Extension is terminated by the action of the chain terminator bifunctional methyltransferase/kinase WbdD. In Escherichia coli, this protein is Serotype-specific mannosyltransferase WbdA.